A 260-amino-acid polypeptide reads, in one-letter code: 14-3-3-like protein GF14-F (260 aa).

The interval 241–260 (NAEDGGDEIKEAAKPEGEGH) is disordered. Positions 247 to 260 (DEIKEAAKPEGEGH) are enriched in basic and acidic residues.

Belongs to the 14-3-3 family. In terms of assembly, may form a complex with the transcriptional activator VP1 and the bZIP transcription factor EMBP1. Expressed in seedlings, roots and panicles and at lower levels in flag leaves and internodes.

Its subcellular location is the cytoplasm. The protein resides in the nucleus. Is associated with a DNA binding complex that binds to the G box, a well-characterized cis-acting DNA regulatory element found in plant genes. In Oryza sativa subsp. japonica (Rice), this protein is 14-3-3-like protein GF14-F (GF14F).